The sequence spans 45 residues: uncharacterized protein (45 aa).

This is an uncharacterized protein from Saccharomyces cerevisiae (strain ATCC 204508 / S288c) (Baker's yeast).